Here is a 51-residue protein sequence, read N- to C-terminus: Putative antitoxin VapB6 (51 aa).

Its function is as follows. Antitoxin component of a possible type II toxin-antitoxin (TA) system. The cognate toxin is VapC6. This chain is Putative antitoxin VapB6 (vapB6), found in Mycobacterium tuberculosis (strain CDC 1551 / Oshkosh).